We begin with the raw amino-acid sequence, 994 residues long: Valine--tRNA ligase (994 aa).

Positions 43 to 53 (PNVTGTLHMGH) match the 'HIGH' region motif. Residues 332–356 (IASGATSDTTDTPSDSDASNASNQH) are disordered. The segment covering 333–353 (ASGATSDTTDTPSDSDASNAS) has biased composition (low complexity). A 'KMSKS' region motif is present at residues 585 to 589 (KMSKS). K588 serves as a coordination point for ATP. A disordered region spans residues 691–713 (TAHSPAQHQAGQDGQDVPRTPQP). A coiled-coil region spans residues 928-994 (LIDVDAERAR…NGLRERRTTL (67 aa)).

It belongs to the class-I aminoacyl-tRNA synthetase family. ValS type 1 subfamily. In terms of assembly, monomer.

The protein resides in the cytoplasm. It catalyses the reaction tRNA(Val) + L-valine + ATP = L-valyl-tRNA(Val) + AMP + diphosphate. Functionally, catalyzes the attachment of valine to tRNA(Val). As ValRS can inadvertently accommodate and process structurally similar amino acids such as threonine, to avoid such errors, it has a 'posttransfer' editing activity that hydrolyzes mischarged Thr-tRNA(Val) in a tRNA-dependent manner. The chain is Valine--tRNA ligase from Xylella fastidiosa (strain M23).